The chain runs to 483 residues: Trigger factor (483 aa).

In terms of domain architecture, PPIase FKBP-type spans 162 to 243; that stretch reads GDYVSLDLSA…VRGVKEKELP (82 aa). A disordered region spans residues 459–483; the sequence is AVAPGDGDATVEPVEPVEAETDGNG. The segment covering 473–483 has biased composition (acidic residues); the sequence is EPVEAETDGNG.

It belongs to the FKBP-type PPIase family. Tig subfamily.

The protein localises to the cytoplasm. The enzyme catalyses [protein]-peptidylproline (omega=180) = [protein]-peptidylproline (omega=0). Functionally, involved in protein export. Acts as a chaperone by maintaining the newly synthesized protein in an open conformation. Functions as a peptidyl-prolyl cis-trans isomerase. This is Trigger factor from Frankia casuarinae (strain DSM 45818 / CECT 9043 / HFP020203 / CcI3).